We begin with the raw amino-acid sequence, 475 residues long: Aspartyl/glutamyl-tRNA(Asn/Gln) amidotransferase subunit B (475 aa).

The protein belongs to the GatB/GatE family. GatB subfamily. In terms of assembly, heterotrimer of A, B and C subunits.

It catalyses the reaction L-glutamyl-tRNA(Gln) + L-glutamine + ATP + H2O = L-glutaminyl-tRNA(Gln) + L-glutamate + ADP + phosphate + H(+). The enzyme catalyses L-aspartyl-tRNA(Asn) + L-glutamine + ATP + H2O = L-asparaginyl-tRNA(Asn) + L-glutamate + ADP + phosphate + 2 H(+). Its function is as follows. Allows the formation of correctly charged Asn-tRNA(Asn) or Gln-tRNA(Gln) through the transamidation of misacylated Asp-tRNA(Asn) or Glu-tRNA(Gln) in organisms which lack either or both of asparaginyl-tRNA or glutaminyl-tRNA synthetases. The reaction takes place in the presence of glutamine and ATP through an activated phospho-Asp-tRNA(Asn) or phospho-Glu-tRNA(Gln). The protein is Aspartyl/glutamyl-tRNA(Asn/Gln) amidotransferase subunit B of Bacillus anthracis (strain A0248).